We begin with the raw amino-acid sequence, 584 residues long: 2-succinyl-5-enolpyruvyl-6-hydroxy-3-cyclohexene-1-carboxylate synthase (584 aa).

It belongs to the TPP enzyme family. MenD subfamily. In terms of assembly, homodimer. It depends on Mg(2+) as a cofactor. Mn(2+) serves as cofactor. Requires thiamine diphosphate as cofactor.

It carries out the reaction isochorismate + 2-oxoglutarate + H(+) = 5-enolpyruvoyl-6-hydroxy-2-succinyl-cyclohex-3-ene-1-carboxylate + CO2. It functions in the pathway quinol/quinone metabolism; 1,4-dihydroxy-2-naphthoate biosynthesis; 1,4-dihydroxy-2-naphthoate from chorismate: step 2/7. Its pathway is quinol/quinone metabolism; menaquinone biosynthesis. In terms of biological role, catalyzes the thiamine diphosphate-dependent decarboxylation of 2-oxoglutarate and the subsequent addition of the resulting succinic semialdehyde-thiamine pyrophosphate anion to isochorismate to yield 2-succinyl-5-enolpyruvyl-6-hydroxy-3-cyclohexene-1-carboxylate (SEPHCHC). In Bacillus anthracis, this protein is 2-succinyl-5-enolpyruvyl-6-hydroxy-3-cyclohexene-1-carboxylate synthase.